A 487-amino-acid polypeptide reads, in one-letter code: UPF0276 protein SAV_2218 (487 aa).

The tract at residues 1-285 (MVEEGTMERL…LGAIRKTLEK (285 aa)) is UPF0276. Residues 286 to 487 (AGTRAGASAG…RATRRVLLRR (202 aa)) form a unknown region. The disordered stretch occupies residues 319-348 (AGPRRGGADAQAAPRAAGTEALSAASTSTP). The span at 326–348 (ADAQAAPRAAGTEALSAASTSTP) shows a compositional bias: low complexity.

It in the N-terminal section; belongs to the UPF0276 family.

This is UPF0276 protein SAV_2218 from Streptomyces avermitilis (strain ATCC 31267 / DSM 46492 / JCM 5070 / NBRC 14893 / NCIMB 12804 / NRRL 8165 / MA-4680).